The following is a 259-amino-acid chain: Ribonuclease HII (259 aa).

Residues 70–258 (TLIAGIDEVG…VKSLVLGKKE (189 aa)) form the RNase H type-2 domain. The a divalent metal cation site is built by aspartate 76, glutamate 77, and aspartate 168.

This sequence belongs to the RNase HII family. Requires Mn(2+) as cofactor. Mg(2+) serves as cofactor.

Its subcellular location is the cytoplasm. It catalyses the reaction Endonucleolytic cleavage to 5'-phosphomonoester.. In terms of biological role, endonuclease that specifically degrades the RNA of RNA-DNA hybrids. The sequence is that of Ribonuclease HII from Streptococcus pneumoniae (strain 70585).